A 577-amino-acid polypeptide reads, in one-letter code: MNIQSLINDKVSQALEAAGAPAGSPAAVRQSAKAQFGDYQANGVMGVAKRLGTNPREFAQKVLDVLDLDGIASKTEIAGPGFINIFLSEEFLAKQAEAALADERLGVAKEEQQNIVADYSAPNVAKEMHVGHLRSTIIGDAVVRTLEFLGHNVTRANHIGDWGTQFGMLIANLERIQKEKGEVSMELSDLEGFYRESKKLYDEDEEFAVTARGYVVKLQSGDEFCAEMWKKLVDVTMVQNQRNYDRLNVSLTRDNVMGESMYNSMLAPIVADLQKQGLAVESEGAQVVFLDEYKNKDGEPMGVIVQKRDGGFLYTTTDIACAKYRYEELNADRVLYFIDSRQHQHLMQAWTIVRKAGYVPESVSLEHHAFGMMLGKDGRPFKTRAGGTVRLADLLDEAEERATKLIEEKNKDLSAEEKAKIATTVAMAAVKYSDLSKHRTTDYIFDWDNMLAFEGNTAPYMQYAYTRVASIFSKAGLSMDELTGEVKITDEKEKALVAKLMQFEEAVQAVASEGQPHLMCAYLFELAGQFSSFYEACPILNNEDDAVKQSRLKLAALTAKTIKQGLELLGIETLERM.

The 'HIGH' region signature appears at 122–132 (PNVAKEMHVGH).

Belongs to the class-I aminoacyl-tRNA synthetase family. Monomer.

It localises to the cytoplasm. The enzyme catalyses tRNA(Arg) + L-arginine + ATP = L-arginyl-tRNA(Arg) + AMP + diphosphate. This is Arginine--tRNA ligase from Aliivibrio fischeri (strain ATCC 700601 / ES114) (Vibrio fischeri).